Here is a 219-residue protein sequence, read N- to C-terminus: HTH-type transcriptional regulator LutR (219 aa).

One can recognise an HTH gntR-type domain in the interval Met-1–Phe-56. The segment at residues Val-16 to Ser-35 is a DNA-binding region (H-T-H motif).

Its function is as follows. Negatively regulates the transcription of the lutABC operon, which is required for L-lactate utilization. LutR activity is regulated by lactate, since presence of L-lactate, that probably binds to LutR, leads to derepression of the operon. Also appears to be essential for bacilysin biosynthesis. In Bacillus subtilis (strain 168), this protein is HTH-type transcriptional regulator LutR (lutR).